Here is a 342-residue protein sequence, read N- to C-terminus: Dihydroorotate dehydrogenase (quinone) (342 aa).

FMN is bound by residues 65–69 (AGLDK) and Thr-89. Residue Lys-69 coordinates substrate. A substrate-binding site is contributed by 114–118 (NRMGF). FMN-binding residues include Asn-142 and Asn-175. Asn-175 is a substrate binding site. Ser-178 serves as the catalytic Nucleophile. Residue Asn-180 coordinates substrate. Residues Lys-220 and Thr-248 each coordinate FMN. 249 to 250 (NT) is a binding site for substrate. FMN-binding positions include Gly-271, Gly-300, and 321-322 (YT).

Belongs to the dihydroorotate dehydrogenase family. Type 2 subfamily. Monomer. FMN is required as a cofactor.

The protein resides in the cell membrane. The enzyme catalyses (S)-dihydroorotate + a quinone = orotate + a quinol. Its pathway is pyrimidine metabolism; UMP biosynthesis via de novo pathway; orotate from (S)-dihydroorotate (quinone route): step 1/1. Functionally, catalyzes the conversion of dihydroorotate to orotate with quinone as electron acceptor. The sequence is that of Dihydroorotate dehydrogenase (quinone) from Burkholderia pseudomallei (strain 668).